The chain runs to 227 residues: Nitrobenzene nitroreductase (227 aa).

FMN is bound at residue 14–18 (RRAKR). Residues Ser44 and Ile109 each contribute to the NADP(+) site. FMN-binding positions include 172–173 (VF) and Lys215.

Belongs to the nitroreductase family. Monomer. The cofactor is FMN.

It catalyses the reaction N-phenylhydroxylamine + 2 NADP(+) + H2O = nitrobenzene + 2 NADPH + 2 H(+). Its pathway is xenobiotic degradation; nitrobenzene degradation. With respect to regulation, inhibited by dicumarol, p-hydroxymercuribenzoate and salicyl hydroxamate. Functionally, involved in the biodegradation of nitroaromatic compounds. Catalyzes the two-electron reduction of nitrobenzene (NB) to produce a nitrosobenzene (NOB) intermediate, which is immediately reduced to hydroxylaminobenzene (HAB) by a second two-electron transfer. Also active on menadione and nitrofurazone. Replacing NADPH with NADH results in a 4-fold decrease in the reaction rate. The polypeptide is Nitrobenzene nitroreductase (Ectopseudomonas oleovorans (Pseudomonas oleovorans)).